We begin with the raw amino-acid sequence, 282 residues long: MKITNYEIYKLKKSGLTNQQILKVLEYGENVDQELLLGDIADISGCRNPAVFMERYFQIDDAHLSKEFQKFPSFSILDDCYPWDLSEIYDAPVLLFYKGNLDLLKFPKVAVVGSRACSKQGAKSVEKVIQGLENELVIVSGLAKGIDTAAHMAALQNGGKTIAVIGTGLDVFYPKANKRLQDYIGNDHLVLSEYGPGEQPLKFHFPARNRIIAGLCRGVIVAEAKMRSGSLITCERAMEEGRDVFAIPGSILDGLSDGCHHLIQEGAKLVTSGQDVLAEFEF.

Belongs to the DprA/Smf family. In terms of assembly, homodimer; forms tail-to-tail dimers, forms nucleoprotein complex (NPC) which requires at least 30 nucleotides (nt) of ssDNA becoming optimal with 50 nt. Interacts with RecA, forms mixed DprA-RecA-ssDNA filaments. Interacts with ComFA and ComFC.

It localises to the cytoplasm. In terms of biological role, protein that helps load RecA onto ssDNA during transformation. Required for DNA transformation. Not required for DNA uptake but for a later stage of transformation. Thought to interact at the cell pole with newly imported transforming ssDNA which it binds cooperatively, protecting linear and circular ssDNA from nuclease action. Forms bridges between DNA segments. Favors the loading of RecA onto ssDNA and formation of RecA-DNA filaments, triggering RecA-catalysis of ATP-driven homologous DNA pairing. In Streptococcus pneumoniae (strain ATCC BAA-255 / R6), this protein is DNA processing protein DprA.